Consider the following 663-residue polypeptide: DNA ligase (663 aa).

Residues 33-37 (DYSYD), 82-83 (SI), and Glu112 each bind NAD(+). Catalysis depends on Lys114, which acts as the N6-AMP-lysine intermediate. Residues Arg135, Glu171, Lys285, and Lys309 each coordinate NAD(+). Zn(2+)-binding residues include Cys403, Cys406, Cys419, and Cys424. The region spanning 581–663 (DKEAPLQGKV…LRILDAKSVS (83 aa)) is the BRCT domain.

Belongs to the NAD-dependent DNA ligase family. LigA subfamily. Mg(2+) serves as cofactor. The cofactor is Mn(2+).

The enzyme catalyses NAD(+) + (deoxyribonucleotide)n-3'-hydroxyl + 5'-phospho-(deoxyribonucleotide)m = (deoxyribonucleotide)n+m + AMP + beta-nicotinamide D-nucleotide.. DNA ligase that catalyzes the formation of phosphodiester linkages between 5'-phosphoryl and 3'-hydroxyl groups in double-stranded DNA using NAD as a coenzyme and as the energy source for the reaction. It is essential for DNA replication and repair of damaged DNA. The polypeptide is DNA ligase (Chlamydia trachomatis serovar D (strain ATCC VR-885 / DSM 19411 / UW-3/Cx)).